The sequence spans 69 residues: Putative membrane protein insertion efficiency factor (69 aa).

The protein belongs to the UPF0161 family.

Its subcellular location is the cell membrane. Could be involved in insertion of integral membrane proteins into the membrane. In Clostridium perfringens (strain SM101 / Type A), this protein is Putative membrane protein insertion efficiency factor.